Consider the following 267-residue polypeptide: Thiamine thiazole synthase (267 aa).

Residues S41, 60 to 61, G68, V132, and 160 to 162 each bind NAD(+); these read ER and HVD. Fe cation-binding residues include D162 and H177. M227 is a binding site for NAD(+). R237 is a binding site for glycine.

The protein belongs to the THI4 family. As to quaternary structure, homooctamer; tetramer of dimers. It depends on Fe(2+) as a cofactor.

It catalyses the reaction hydrogen sulfide + glycine + NAD(+) = ADP-5-ethyl-4-methylthiazole-2-carboxylate + nicotinamide + 3 H2O + H(+). The protein operates within cofactor biosynthesis; thiamine diphosphate biosynthesis. Its function is as follows. Involved in the biosynthesis of the thiazole moiety of thiamine. Catalyzes the conversion of NAD and glycine to adenosine diphosphate 5-(2-hydroxyethyl)-4-methylthiazole-2-carboxylate (ADT), an adenylated thiazole intermediate, using free sulfide as a source of sulfur. The chain is Thiamine thiazole synthase from Saccharolobus islandicus (strain Y.N.15.51 / Yellowstone #2) (Sulfolobus islandicus).